A 137-amino-acid polypeptide reads, in one-letter code: Small ribosomal subunit protein uS12 (137 aa).

A 3-methylthioaspartic acid modification is found at Asp102.

It belongs to the universal ribosomal protein uS12 family. In terms of assembly, part of the 30S ribosomal subunit. Contacts proteins S8 and S17. May interact with IF1 in the 30S initiation complex.

Its function is as follows. With S4 and S5 plays an important role in translational accuracy. Interacts with and stabilizes bases of the 16S rRNA that are involved in tRNA selection in the A site and with the mRNA backbone. Located at the interface of the 30S and 50S subunits, it traverses the body of the 30S subunit contacting proteins on the other side and probably holding the rRNA structure together. The combined cluster of proteins S8, S12 and S17 appears to hold together the shoulder and platform of the 30S subunit. The polypeptide is Small ribosomal subunit protein uS12 (Phytoplasma mali (strain AT)).